The sequence spans 144 residues: Large ribosomal subunit protein uL11 (144 aa).

The protein belongs to the universal ribosomal protein uL11 family. Part of the ribosomal stalk of the 50S ribosomal subunit. Interacts with L10 and the large rRNA to form the base of the stalk. L10 forms an elongated spine to which L12 dimers bind in a sequential fashion forming a multimeric L10(L12)X complex. Post-translationally, one or more lysine residues are methylated.

Its function is as follows. Forms part of the ribosomal stalk which helps the ribosome interact with GTP-bound translation factors. The sequence is that of Large ribosomal subunit protein uL11 from Acidiphilium cryptum (strain JF-5).